We begin with the raw amino-acid sequence, 546 residues long: Putative inactive G-type lectin S-receptor-like serine/threonine-protein kinase SRK (546 aa).

Residues 1 to 31 (MRGELPNKHHSYTFFVFLFFFLILFPDLSIS) form the signal peptide. Topologically, residues 32–441 (VNTLSATESL…FGERRTIRGK (410 aa)) are extracellular. The Bulb-type lectin domain maps to 34–154 (TLSATESLTI…KINESDEFLW (121 aa)). 4 N-linked (GlcNAc...) asparagine glycosylation sites follow: asparagine 46, asparagine 120, asparagine 147, and asparagine 243. Residues 293–329 (PKDTCDLYGICGPYAYCDMSTSPTCNCIKGFQPLSPQ) enclose the EGF-like; atypical domain. 4 disulfide bridges follow: cysteine 297–cysteine 309, cysteine 303–cysteine 317, cysteine 378–cysteine 403, and cysteine 382–cysteine 388. Residues 348-428 (CGEDRFFRLM…DGQDLFVRLA (81 aa)) form the PAN domain. Asparagine 387 carries N-linked (GlcNAc...) asparagine glycosylation. Residues 442 to 462 (IIGLIIGISLMLVLSFIIYCF) traverse the membrane as a helical segment. Topologically, residues 463–546 (WKKKQKRARA…IVYKGRLLDG (84 aa)) are cytoplasmic. The region spanning 524-546 (FSDSNILGRGGFGIVYKGRLLDG) is the Protein kinase domain. 530–538 (LGRGGFGIV) lines the ATP pocket.

It belongs to the protein kinase superfamily. Ser/Thr protein kinase family.

The protein localises to the cell membrane. Its function is as follows. Truncated and inactivated form of SRK, the female specificity determinant of self-incompatibility when active. Most A.thaliana cultivars contain such an inactive form and thus, are self-fertiles. This is Putative inactive G-type lectin S-receptor-like serine/threonine-protein kinase SRK (PSEUDOSRKA) from Arabidopsis thaliana (Mouse-ear cress).